A 189-amino-acid polypeptide reads, in one-letter code: Protein Rex (189 aa).

The span at 1 to 16 (MPKTRRGPRRSQRKRP) shows a compositional bias: basic residues. Positions 1–26 (MPKTRRGPRRSQRKRPPTPWPTSQGL) are disordered. Positions 2 to 18 (PKTRRGPRRSQRKRPPT) match the Nuclear localization signal, and RNA-binding (RxRE) motif. The homomultimerization stretch occupies residues 56-70 (RPAYIVTPYWPPVQS). At Ser-70 the chain carries Phosphoserine; by host. The Nuclear export signal signature appears at 82–93 (LSAQLYSSLSLG). The interval 87–189 (YSSLSLGSPP…PPSPGPSCPR (103 aa)) is disordered. Pro residues predominate over residues 115 to 125 (IQPPTFHPPSS). The segment at 123–131 (PSSRPYANT) is homomultimerization. Thr-174 is modified (phosphothreonine; by host). Ser-177 is modified (phosphoserine; by host). The segment covering 178–189 (FPPPSPGPSCPR) has biased composition (pro residues).

The protein belongs to the deltaretrovirus Rex protein family. As to quaternary structure, homomultimer. Multimeric assembly is essential for activity and involves XPO1. Binds to human XPO1 and KPNB1. Interacts (via N-terminal nuclear localization signal) with human NPM1. Post-translationally, phosphorylated.

The protein resides in the host nucleus. It is found in the host nucleolus. Its subcellular location is the host cytoplasm. In terms of biological role, rex escorts unspliced gag-pro-pol and singly spliced env mRNAs out of the nucleus of infected cells. These mRNAs carry a recognition sequence called Rex responsive element (RxRE or XRE) located at the 3' region of the long terminal repeat (LTR). This function is essential since most HTLV proteins are translated from unspliced or partially spliced pre-mRNAs that cannot exit the nucleus by the pathway used by fully processed cellular mRNAs. Rex itself is translated from a fully spliced mRNA that probably readily exits the nucleus. Rex's nuclear localization signal (NLS) binds directly to KPNB1/importin beta-1 without previous binding to KPNA1/importin alpha-1. KPNB1 binds to the GDP bound form of RAN (Ran-GDP) and targets Rex to the nucleus. In the nucleus, the conversion from Ran-GDP to Ran-GTP dissociates Rex from KPNB1 and allows Rex's binding to the RRE in viral pre-mRNAs. Rex multimerizes on the RRE via cooperative assembly. This multimerization is critical for its full biological activity, since it may shield the viral RNA from being spliced or down-regulated, and probably exposes Rex's nuclear export signal (NES) to the surface. Rex can then form a complex with XPO1/CRM1, RANBP3 and Ran-GTP, leading to nuclear export of the complex. Conversion from Ran-GTP to Ran-GDP mediates dissociation of the Rex/RRE/XPO1/RANBP3/RAN complex, so that Rex can return to the nucleus for a subsequent round of export. The chain is Protein Rex from Homo sapiens (Human).